Reading from the N-terminus, the 291-residue chain is Protease HtpX homolog (291 aa).

2 helical membrane passes run 4–24 and 38–58; these read VFLFLITNLAVILVLSFSARL and LGMLLAFAALIGFGGSFISLL. Residue histidine 144 coordinates Zn(2+). Glutamate 145 is an active-site residue. Residue histidine 148 coordinates Zn(2+). 2 consecutive transmembrane segments (helical) span residues 159 to 179 and 199 to 219; these read LIQGVVNTFVIFLARVFAYAL and ISSIAFEIVFGILASIVVMYF. Glutamate 224 serves as a coordination point for Zn(2+).

It belongs to the peptidase M48B family. Zn(2+) serves as cofactor.

The protein resides in the cell inner membrane. This is Protease HtpX homolog from Chlorobium luteolum (strain DSM 273 / BCRC 81028 / 2530) (Pelodictyon luteolum).